The chain runs to 658 residues: Exoribonuclease 2 (658 aa).

The region spanning 189–530 (REDLTSLYFT…VNHRLIKQVL (342 aa)) is the RNB domain. Positions 576–658 (AVEFDCEIAD…ETRSIVGNII (83 aa)) constitute an S1 motif domain.

The protein belongs to the RNR ribonuclease family. RNase II subfamily.

Its subcellular location is the cytoplasm. The enzyme catalyses Exonucleolytic cleavage in the 3'- to 5'-direction to yield nucleoside 5'-phosphates.. Its function is as follows. Involved in mRNA degradation. Hydrolyzes single-stranded polyribonucleotides processively in the 3' to 5' direction. This chain is Exoribonuclease 2, found in Actinobacillus pleuropneumoniae serotype 5b (strain L20).